The following is an 878-amino-acid chain: Aminopeptidase M1-C (878 aa).

Residues 102–209 (LGEGVLAMDF…MSTYLVAIVV (108 aa)) are required for membrane association. Residues Glu142 and 275–279 (GAMEN) each bind substrate. His311 is a Zn(2+) binding site. Glu312 (proton acceptor) is an active-site residue. Residues His315 and Glu334 each coordinate Zn(2+). Residues 726–727 (LL) carry the Dileucine internalization motif motif.

The protein belongs to the peptidase M1 family. In terms of assembly, homodimer. It depends on Zn(2+) as a cofactor.

It is found in the membrane. The protein resides in the microsome membrane. The protein localises to the cytoplasm. It catalyses the reaction Release of an N-terminal amino acid, Xaa-|-Yaa- from a peptide, amide or arylamide. Xaa is preferably Ala, but may be most amino acids including Pro (slow action). When a terminal hydrophobic residue is followed by a prolyl residue, the two may be released as an intact Xaa-Pro dipeptide.. In Oryza sativa subsp. japonica (Rice), this protein is Aminopeptidase M1-C.